We begin with the raw amino-acid sequence, 393 residues long: Branched-chain-amino-acid aminotransferase, mitochondrial (393 aa).

The N-terminal 16 residues, 1 to 16 (MLQRHSLKLGKFSIRT), are a transit peptide targeting the mitochondrion. Residue K219 is modified to N6-(pyridoxal phosphate)lysine. T315 carries the phosphothreonine modification.

The protein belongs to the class-IV pyridoxal-phosphate-dependent aminotransferase family. Requires pyridoxal 5'-phosphate as cofactor.

It is found in the mitochondrion matrix. It carries out the reaction L-leucine + 2-oxoglutarate = 4-methyl-2-oxopentanoate + L-glutamate. The enzyme catalyses L-isoleucine + 2-oxoglutarate = (S)-3-methyl-2-oxopentanoate + L-glutamate. The catalysed reaction is L-valine + 2-oxoglutarate = 3-methyl-2-oxobutanoate + L-glutamate. It catalyses the reaction a 2-oxocarboxylate + L-methionine = 4-methylsulfanyl-2-oxobutanoate + an L-alpha-amino acid. Its pathway is amino-acid biosynthesis; L-isoleucine biosynthesis; L-isoleucine from 2-oxobutanoate: step 4/4. It participates in amino-acid biosynthesis; L-leucine biosynthesis; L-leucine from 3-methyl-2-oxobutanoate: step 4/4. It functions in the pathway amino-acid biosynthesis; L-valine biosynthesis; L-valine from pyruvate: step 4/4. The protein operates within amino-acid biosynthesis; L-methionine biosynthesis via salvage pathway; L-methionine from S-methyl-5-thio-alpha-D-ribose 1-phosphate: step 6/6. Functionally, mitochondrial isozyme of branched-chain-amino-acid aminotransferase, involved in the biosynthesis of the branched chain amino acids (BCAAs) leucine, isoleucine, and valine. Catalyzes the formation of methionine from 2-keto-4-methylthiobutyrate (KMTB) in the methionine salvage pathway primarily using BCAAs (leucine, isoleucine, and valine) as the amino donors. Appears to be involved in the regulation of the cell cycle, although this may be indirect via metabolic changes. Connects BCAAs and TCA-cycle metabolism governing TCA-cycle flux to activate TORC1 signaling. High copy suppressor of a temperature-sensitive mutation in the ABC transporter, ATM1. The polypeptide is Branched-chain-amino-acid aminotransferase, mitochondrial (Saccharomyces cerevisiae (strain ATCC 204508 / S288c) (Baker's yeast)).